Reading from the N-terminus, the 493-residue chain is Glutamate--tRNA ligase (493 aa).

Positions 10-20 match the 'HIGH' region motif; that stretch reads PSPTGTPHVGL. Positions 254-258 match the 'KMSKS' region motif; the sequence is KLSKR. Position 257 (Lys-257) interacts with ATP.

The protein belongs to the class-I aminoacyl-tRNA synthetase family. Glutamate--tRNA ligase type 1 subfamily. As to quaternary structure, monomer.

Its subcellular location is the cytoplasm. The catalysed reaction is tRNA(Glu) + L-glutamate + ATP = L-glutamyl-tRNA(Glu) + AMP + diphosphate. Its function is as follows. Catalyzes the attachment of glutamate to tRNA(Glu) in a two-step reaction: glutamate is first activated by ATP to form Glu-AMP and then transferred to the acceptor end of tRNA(Glu). In Corynebacterium efficiens (strain DSM 44549 / YS-314 / AJ 12310 / JCM 11189 / NBRC 100395), this protein is Glutamate--tRNA ligase.